The primary structure comprises 122 residues: Secreted RxLR effector protein 80 (122 aa).

Positions 1 to 21 are cleaved as a signal peptide; that stretch reads MKKRALPIVIFVISLQQSSQS. Residues 72–75 carry the RxLR motif; the sequence is RSLR.

This sequence belongs to the RxLR effector family.

Its subcellular location is the secreted. It localises to the host endoplasmic reticulum membrane. Its function is as follows. Secreted effector that dos not suppress the host cell death induced by cell death-inducing proteins. The protein is Secreted RxLR effector protein 80 of Plasmopara viticola (Downy mildew of grapevine).